An 874-amino-acid chain; its full sequence is GRB2-associated and regulator of MAPK protein 2 (874 aa).

The CABIT stretch occupies residues 12–339 (RWSMGAFPLD…LLAGDPRVER (328 aa)). Over residues 188–206 (GGGGPASAGAAGGTGGGGA) the composition is skewed to gly residues. Disordered regions lie at residues 188 to 207 (GGGG…GGAR), 388 to 422 (PGLA…EPAA), 437 to 545 (GPEG…SPSP), 563 to 598 (GESS…AASL), and 625 to 742 (APFG…PSKA). 2 stretches are compositionally biased toward low complexity: residues 388-403 (PGLA…APAG) and 518-545 (SPSS…SPSP). The span at 575-585 (PSTTQPSQASR) shows a compositional bias: polar residues. Low complexity-rich tracts occupy residues 632 to 650 (PFSG…SSGP) and 658 to 691 (ATSG…SSSS). Position 735 is a phosphoserine (serine 735). The 65-residue stretch at 807-871 (SALSLEEVSR…KIMQFIKGWR (65 aa)) folds into the SAM domain.

This sequence belongs to the GAREM family.

Probable adapter protein that may provide a link between cell surface epidermal growth factor receptor and the MAPK/ERK signaling pathway. In Homo sapiens (Human), this protein is GRB2-associated and regulator of MAPK protein 2 (GAREM2).